A 35-amino-acid polypeptide reads, in one-letter code: Peptide Hact-3 (35 aa).

In terms of tissue distribution, expressed in tentacles.

The protein resides in the nematocyst. The protein localises to the secreted. In terms of biological role, peptide with unknown function. Does not exhibit antimicrobial activity against Escherichia coli and Staphylococcus aureus. The chain is Peptide Hact-3 from Heliofungia actiniformis (Mushroom coral).